A 158-amino-acid polypeptide reads, in one-letter code: Encapsulin nanocompartment cargo protein EncB (158 aa).

3 residues coordinate Fe cation: glutamate 22, glutamate 52, and histidine 55. Short sequence motifs (di-iron-binding motif) lie at residues 52–55 (EKEH) and 58–61 (EAVH). Residues 92-158 (ATVHVPTPDG…RGGGGSGSGR (67 aa)) form a disordered region. Residues 142–149 (LTVGSLRR) form a probable targeting peptide region. Over residues 148–158 (RRGGGGSGSGR) the composition is skewed to gly residues.

Belongs to the ferritin-like superfamily.

It localises to the encapsulin nanocompartment. Its function is as follows. Cargo protein of a type 1 encapsulin nanocompartment. May help nucleate Fe atoms in the interior of the encapsulin nanocompartment. Present in about 36 copies/encapsulin nanocompartment. This Myxococcus xanthus (strain DK1622) protein is Encapsulin nanocompartment cargo protein EncB.